The chain runs to 452 residues: Transcription factor PERIANTHIA (452 aa).

The bZIP domain occupies D164–L227. A basic motif region spans residues R166–K186. Residues L192 to L206 are leucine-zipper. Positions V233 to R449 constitute a DOG1 domain.

This sequence belongs to the bZIP family. In terms of assembly, interacts with GRXC7/ROXY1. Interacts with BOP1 and BOP2.

It localises to the nucleus. Transcriptional activator involved in the determination of floral organ number. Acts to determine floral organ patterning by establishing floral organ primordia in specific numbers and positions. Plays a role in regulating stem cell fate by directly controlling AG expression. Binds to the 5'-AAGAAT-3' cis-acting element found in AG promoter. Might represent a target for a post-translational modification by GRXC7/ROXY1. In Arabidopsis thaliana (Mouse-ear cress), this protein is Transcription factor PERIANTHIA (PAN).